Reading from the N-terminus, the 502-residue chain is Glycerol kinase (502 aa).

T14 contacts ADP. ATP-binding residues include T14, T15, and S16. T14 contacts sn-glycerol 3-phosphate. R18 serves as a coordination point for ADP. Sn-glycerol 3-phosphate contacts are provided by R84, E85, Y136, and D246. Glycerol is bound by residues R84, E85, Y136, D246, and Q247. ADP contacts are provided by T268 and G311. ATP-binding residues include T268, G311, Q315, and G412. 2 residues coordinate ADP: G412 and N416.

The protein belongs to the FGGY kinase family. In terms of assembly, homotetramer and homodimer (in equilibrium). Heterodimer with EIIA-Glc. Binds 1 zinc ion per glycerol kinase EIIA-Glc dimer. The zinc ion is important for dimerization.

It carries out the reaction glycerol + ATP = sn-glycerol 3-phosphate + ADP + H(+). Its pathway is polyol metabolism; glycerol degradation via glycerol kinase pathway; sn-glycerol 3-phosphate from glycerol: step 1/1. Activity of this regulatory enzyme is affected by several metabolites. Allosterically and non-competitively inhibited by fructose 1,6-bisphosphate (FBP) and unphosphorylated phosphocarrier protein EIIA-Glc (III-Glc), an integral component of the bacterial phosphotransferase (PTS) system. Key enzyme in the regulation of glycerol uptake and metabolism. Catalyzes the phosphorylation of glycerol to yield sn-glycerol 3-phosphate. The polypeptide is Glycerol kinase (Enterobacter sp. (strain 638)).